We begin with the raw amino-acid sequence, 236 residues long: Phosphoribosylaminoimidazole-succinocarboxamide synthase (236 aa).

The protein belongs to the SAICAR synthetase family.

The catalysed reaction is 5-amino-1-(5-phospho-D-ribosyl)imidazole-4-carboxylate + L-aspartate + ATP = (2S)-2-[5-amino-1-(5-phospho-beta-D-ribosyl)imidazole-4-carboxamido]succinate + ADP + phosphate + 2 H(+). The protein operates within purine metabolism; IMP biosynthesis via de novo pathway; 5-amino-1-(5-phospho-D-ribosyl)imidazole-4-carboxamide from 5-amino-1-(5-phospho-D-ribosyl)imidazole-4-carboxylate: step 1/2. The protein is Phosphoribosylaminoimidazole-succinocarboxamide synthase (purC) of Rickettsia prowazekii (strain Madrid E).